Here is a 195-residue protein sequence, read N- to C-terminus: Transcription factor 15 (195 aa).

Residues 44–65 form a disordered region; it reads LEAARRGPGPGSGRRASNGAGP. A compositionally biased stretch (low complexity) spans 56–65; it reads GRRASNGAGP. Serine 60 is subject to Phosphoserine. The bHLH domain maps to 70 to 122; the sequence is RQRQAANARERDRTQSVNTAFTALRTLIPTEPVDRKLSKIETLRLASSYIAHL.

In terms of assembly, heterodimer; efficient DNA binding requires dimerization with another bHLH protein, such as TCF3/E12. Interacts with MEOX2. As to expression, expressed in heart and skeletal muscle. Specifically expressed in a subpopulation of embryonic stem cells (ESCs), that are still undifferentiated but primed for ifferentiation. Expressed in hematopoietic stem cells (HSCs).

The protein localises to the nucleus. Early transcription factor that plays a key role in somitogenesis, paraxial mesoderm development and regulation of stem cell pluripotency. Essential for the mesenchymal to epithelial transition associated with somite formation. Required for somite morphogenesis, thereby regulating patterning of the axial skeleton and skeletal muscles. Required for proper localization of somite epithelium markers during the mesenchymal to epithelial transition. Also plays a key role in regulation of stem cell pluripotency. Promotes pluripotency exit of embryonic stem cells (ESCs) by priming ESCs for differentiation. Acts as a key regulator of self-renewal of hematopoietic stem cells (HSCs) by mediating HSCs quiescence and long-term self-renewal. Together with MEOX2, regulates transcription in heart endothelial cells to regulate fatty acid transport across heart endothelial cells. Acts by forming a heterodimer with another helix-loop-helix (bHLH) protein, such as TCF3/E12, that binds DNA on E-box motifs (5'-CANNTG-3') and activates transcription of target genes. This chain is Transcription factor 15, found in Mus musculus (Mouse).